A 313-amino-acid polypeptide reads, in one-letter code: Aspartate carbamoyltransferase catalytic subunit (313 aa).

Positions 58 and 59 each coordinate carbamoyl phosphate. Lys86 lines the L-aspartate pocket. Carbamoyl phosphate contacts are provided by Arg108, His136, and Gln139. 2 residues coordinate L-aspartate: Arg169 and Arg223. 2 residues coordinate carbamoyl phosphate: Gly264 and Pro265.

The protein belongs to the aspartate/ornithine carbamoyltransferase superfamily. ATCase family. Heterododecamer (2C3:3R2) of six catalytic PyrB chains organized as two trimers (C3), and six regulatory PyrI chains organized as three dimers (R2).

It carries out the reaction carbamoyl phosphate + L-aspartate = N-carbamoyl-L-aspartate + phosphate + H(+). The protein operates within pyrimidine metabolism; UMP biosynthesis via de novo pathway; (S)-dihydroorotate from bicarbonate: step 2/3. Its function is as follows. Catalyzes the condensation of carbamoyl phosphate and aspartate to form carbamoyl aspartate and inorganic phosphate, the committed step in the de novo pyrimidine nucleotide biosynthesis pathway. The sequence is that of Aspartate carbamoyltransferase catalytic subunit from Halothermothrix orenii (strain H 168 / OCM 544 / DSM 9562).